A 481-amino-acid polypeptide reads, in one-letter code: DNA gyrase subunit B (481 aa).

The 120-residue stretch at 323–442 (CELYLVEGDS…QGYVYIAQPP (120 aa)) folds into the Toprim domain. Glu329, Asp407, and Asp409 together coordinate Mg(2+).

Belongs to the type II topoisomerase GyrB family. Heterotetramer, composed of two GyrA and two GyrB chains. In the heterotetramer, GyrA contains the active site tyrosine that forms a transient covalent intermediate with DNA, while GyrB binds cofactors and catalyzes ATP hydrolysis. Mg(2+) serves as cofactor. The cofactor is Mn(2+). Ca(2+) is required as a cofactor.

The protein localises to the cytoplasm. The catalysed reaction is ATP-dependent breakage, passage and rejoining of double-stranded DNA.. In terms of biological role, a type II topoisomerase that negatively supercoils closed circular double-stranded (ds) DNA in an ATP-dependent manner to modulate DNA topology and maintain chromosomes in an underwound state. Negative supercoiling favors strand separation, and DNA replication, transcription, recombination and repair, all of which involve strand separation. Also able to catalyze the interconversion of other topological isomers of dsDNA rings, including catenanes and knotted rings. Type II topoisomerases break and join 2 DNA strands simultaneously in an ATP-dependent manner. This Chitinophaga japonensis (Flexibacter japonensis) protein is DNA gyrase subunit B (gyrB).